The following is a 267-amino-acid chain: CD82 antigen (267 aa).

Residues 1–11 (MGSACIKVTKY) lie on the Cytoplasmic side of the membrane. A lipid anchor (S-palmitoyl cysteine) is attached at cysteine 5. A helical transmembrane segment spans residues 12-32 (FLFLFNLIFFILGAVILGFGV). At 33–53 (WILADKSSFISVLQTSSSSLR) the chain is on the extracellular side. A helical transmembrane segment spans residues 54 to 72 (MGAYVFIGVGAVTMLMGFL). The Cytoplasmic portion of the chain corresponds to 73-83 (GCIGAVNEVRC). A lipid anchor (S-palmitoyl cysteine) is attached at cysteine 74. The helical transmembrane segment at 84–110 (LLGLYFAFLLLILIAQVTAGALFYFNM) threads the bilayer. At 111–228 (GKLKQEMGGI…KVQAWLQENL (118 aa)) the chain is on the extracellular side. N-linked (GlcNAc...) asparagine glycosylation is found at asparagine 129, asparagine 157, and asparagine 198. A helical membrane pass occupies residues 229-250 (GIILGVGVGVAIIELLGMVLSI). Residues 251-267 (CLCRHVHSEDYSKVPKY) are Cytoplasmic-facing.

The protein belongs to the tetraspanin (TM4SF) family. In terms of assembly, forms homooligomers. Interacts directly with IGSF8. Interacts with EGFR. Interacts with VEGFA and PDGFB. Interacts with ITGA4. Interacts with ITGA6; this interaction reduces ITGA6 cell surface expression. Interacts with ITGB1. Interacts with TLR4; this interaction inhibits TLR4-mediated signaling pathway. Interacts with TLR9. Interacts with PLAUR. Post-translationally, palmitoylated. Palmitoylation contributes to oligomerization and surface expression. In terms of tissue distribution, lymphoid specific.

It is found in the cell membrane. The protein localises to the cytoplasmic vesicle. It localises to the phagosome. Its function is as follows. Structural component of specialized membrane microdomains known as tetraspanin-enriched microdomains (TERMs), which act as platforms for receptor clustering and signaling. Participates thereby in diverse biological functions such as cell signal transduction, adhesion, migration and protein trafficking. Acts as a attenuator of EGF signaling, facilitating ligand-induced endocytosis of the receptor and its subsequent desensitization. Mechanistically, modulates ligand-induced ubiquitination and trafficking of EGFR via E3 ligase CBL phosphorylation by PKC. Increases cell-matrix adhesion by regulating the membrane organization of integrin alpha4/ITA4. Modulates adhesion and suppresses cell migration through other integrins such as the alpha6/ITGA6 and beta1/ITGB1. Decreases cell-associated plasminogen activation by interfering with the interaction between urokinase-type plasminogen activator/PLAU and its receptor PLAUR. Associates with CD4 or CD8 and delivers costimulatory signals for the TCR/CD3 pathway. Plays a role in TLR9 trafficking to acidified CpG-containing compartments by controlling interaction between TLR9 and VAMP3 and subsequent myddosome assembly. Inhibits LPS-induced inflammatory response by preventing binding of LPS to TLR4 on the cell surface. Plays a role in the activation of macrophages into anti-inflammatory phenotypes. Independently of Toll-like receptor (TLR) signaling, is recruited to pathogen-containing phagosomes prior to fusion with lysosomes and thereby participates in antigen presentation. Also acts to control angiogenesis and switch angiogenic milieu to quiescent state by binding and sequestering VEGFA and PDGFB to inhibit the signaling they trigger via their respective cell surface receptor. The sequence is that of CD82 antigen (CD82) from Homo sapiens (Human).